We begin with the raw amino-acid sequence, 312 residues long: Lipoyl synthase (312 aa).

The segment covering 1 to 10 (MNEAPAEKQK) has biased composition (basic and acidic residues). The interval 1-20 (MNEAPAEKQKPQQGKRFSER) is disordered. Positions 51, 56, 62, 77, 81, 84, and 290 each coordinate [4Fe-4S] cluster. In terms of domain architecture, Radical SAM core spans 63-280 (WSRKTATYLA…RSVGESLGLF (218 aa)).

It belongs to the radical SAM superfamily. Lipoyl synthase family. The cofactor is [4Fe-4S] cluster.

Its subcellular location is the cytoplasm. It catalyses the reaction [[Fe-S] cluster scaffold protein carrying a second [4Fe-4S](2+) cluster] + N(6)-octanoyl-L-lysyl-[protein] + 2 oxidized [2Fe-2S]-[ferredoxin] + 2 S-adenosyl-L-methionine + 4 H(+) = [[Fe-S] cluster scaffold protein] + N(6)-[(R)-dihydrolipoyl]-L-lysyl-[protein] + 4 Fe(3+) + 2 hydrogen sulfide + 2 5'-deoxyadenosine + 2 L-methionine + 2 reduced [2Fe-2S]-[ferredoxin]. The protein operates within protein modification; protein lipoylation via endogenous pathway; protein N(6)-(lipoyl)lysine from octanoyl-[acyl-carrier-protein]: step 2/2. Catalyzes the radical-mediated insertion of two sulfur atoms into the C-6 and C-8 positions of the octanoyl moiety bound to the lipoyl domains of lipoate-dependent enzymes, thereby converting the octanoylated domains into lipoylated derivatives. The sequence is that of Lipoyl synthase from Chlamydia felis (strain Fe/C-56) (Chlamydophila felis).